Reading from the N-terminus, the 208-residue chain is Large ribosomal subunit protein uL3 (208 aa).

A disordered region spans residues 116-148 (GFQGVIKRHGQSRGPMAHGSRYHRRPGSMGPVA).

The protein belongs to the universal ribosomal protein uL3 family. In terms of assembly, part of the 50S ribosomal subunit. Forms a cluster with proteins L14 and L19.

Functionally, one of the primary rRNA binding proteins, it binds directly near the 3'-end of the 23S rRNA, where it nucleates assembly of the 50S subunit. The chain is Large ribosomal subunit protein uL3 from Streptococcus pneumoniae (strain Hungary19A-6).